A 434-amino-acid chain; its full sequence is Methylenetetrahydrofolate--tRNA-(uracil-5-)-methyltransferase TrmFO (434 aa).

10–15 contributes to the FAD binding site; the sequence is GAGLAG.

This sequence belongs to the MnmG family. TrmFO subfamily. FAD serves as cofactor.

The protein resides in the cytoplasm. The enzyme catalyses uridine(54) in tRNA + (6R)-5,10-methylene-5,6,7,8-tetrahydrofolate + NADH + H(+) = 5-methyluridine(54) in tRNA + (6S)-5,6,7,8-tetrahydrofolate + NAD(+). The catalysed reaction is uridine(54) in tRNA + (6R)-5,10-methylene-5,6,7,8-tetrahydrofolate + NADPH + H(+) = 5-methyluridine(54) in tRNA + (6S)-5,6,7,8-tetrahydrofolate + NADP(+). In terms of biological role, catalyzes the folate-dependent formation of 5-methyl-uridine at position 54 (M-5-U54) in all tRNAs. This Bacillus cereus (strain G9842) protein is Methylenetetrahydrofolate--tRNA-(uracil-5-)-methyltransferase TrmFO.